Consider the following 291-residue polypeptide: MLEGQIIKALSGFYYVFSEGKIYQCRARGNFRKRNISPLVGDDVEFQVENKTDGYILDVLSRENALVRPPVANIDIAILVFSAVEPDFSTNLADRFLVAIEKEDIQPVICISKMDLATDAEKEQIAVYKEVYETIGYDVFVTNDEPDKEAIKDYISGKTAVIAGQSGVGKSTLLNSLNSDLTLKTAEISNSLGRGKHTTRHVELMPIGDGFVADTPGFSSIEWDDLQPETLQFCFPEMEDRRSGCKFRGCMHDNEPNCAVKTAVEANEIADFRYKHYIQILQELKNRKPRY.

The CP-type G domain maps to 63 to 221 (ENALVRPPVA…VADTPGFSSI (159 aa)). Residues 112 to 115 (SKMD) and 164 to 172 (GQSGVGKST) contribute to the GTP site. 4 residues coordinate Zn(2+): Cys245, Cys250, His252, and Cys258.

The protein belongs to the TRAFAC class YlqF/YawG GTPase family. RsgA subfamily. Monomer. Associates with 30S ribosomal subunit, binds 16S rRNA. Zn(2+) serves as cofactor.

It localises to the cytoplasm. Functionally, one of several proteins that assist in the late maturation steps of the functional core of the 30S ribosomal subunit. Helps release RbfA from mature subunits. May play a role in the assembly of ribosomal proteins into the subunit. Circularly permuted GTPase that catalyzes slow GTP hydrolysis, GTPase activity is stimulated by the 30S ribosomal subunit. The chain is Small ribosomal subunit biogenesis GTPase RsgA 2 from Listeria innocua serovar 6a (strain ATCC BAA-680 / CLIP 11262).